We begin with the raw amino-acid sequence, 727 residues long: Epithelial splicing regulatory protein 2 (727 aa).

The tract at residues 1–22 is disordered; it reads MTPPPPPPPPPGPDPAADPAAD. The residue at position 83 (Ser83) is a Phosphoserine. RRM domains lie at 257–353, 358–438, and 475–555; these read TVVR…RFLS, VILR…RSTA, and DCVR…PCST. Ser573 bears the Phosphoserine mark.

Belongs to the ESRP family. As to quaternary structure, interacts with RBPMS. As to expression, epithelial cell-specific.

The protein resides in the nucleus. Its function is as follows. mRNA splicing factor that regulates the formation of epithelial cell-specific isoforms. Specifically regulates the expression of FGFR2-IIIb, an epithelial cell-specific isoform of FGFR2. Also regulates the splicing of CD44, CTNND1, ENAH, 3 transcripts that undergo changes in splicing during the epithelial-to-mesenchymal transition (EMT). Acts by directly binding specific sequences in mRNAs. Binds the GU-rich sequence motifs in the ISE/ISS-3, a cis-element regulatory region present in the mRNA of FGFR2. The chain is Epithelial splicing regulatory protein 2 (ESRP2) from Homo sapiens (Human).